Reading from the N-terminus, the 749-residue chain is Transcription factor RFX3 (749 aa).

A DNA-binding region (RFX-type winged-helix) is located at residues 183–258 (HLQWLLDNYE…YHYYGIRVKP (76 aa)). The segment at 663-699 (VSPGNLDKDEGSEVESETDEDLDDSSEPRAKREKTEL) is disordered. The span at 674-687 (SEVESETDEDLDDS) shows a compositional bias: acidic residues. Residues 688–698 (SEPRAKREKTE) are compositionally biased toward basic and acidic residues.

The protein belongs to the RFX family. In terms of assembly, heterodimer; heterodimerizes with RFX1 and RFX2, and RFX6. In terms of tissue distribution, expressed in ciliated cells of the node and in the ciliated ependymal cells of the subcommissural organ (SCO), choroid plexuses (CP) and ventricular walls during embryonic and postnatal development. Expressed in developing and mature pancreatic endocrine cells during embryogenesis and in adults (at protein level).

The protein resides in the nucleus. Transcription factor required for ciliogenesis and islet cell differentiation during endocrine pancreas development. Essential for the differentiation of nodal monocilia and left-right asymmetry specification during embryogenesis. Required for the biogenesis of motile cilia by governing growth and beating efficiency of motile cells. Also required for ciliated ependymal cell differentiation. Together with RFX6, participates in the differentiation of 4 of the 5 islet cell types during endocrine pancreas development, with the exception of pancreatic PP (polypeptide-producing) cells. Regulates transcription by forming a heterodimer with another RFX protein and binding to the X-box in the promoter of target genes. Regulates the expression of genes involved in ciliary assembly (DYNC2LI1, FOXJ1 and BBS4) and genes involved in ciliary motility (DNAH11, DNAH9 and DNAH5). Represses transcription of MAP1A in non-neuronal cells but not in neuronal cells. In Mus musculus (Mouse), this protein is Transcription factor RFX3 (Rfx3).